A 134-amino-acid chain; its full sequence is Phosphoribosyl-AMP cyclohydrolase (134 aa).

Aspartate 78 is a binding site for Mg(2+). A Zn(2+)-binding site is contributed by cysteine 79. 2 residues coordinate Mg(2+): aspartate 80 and aspartate 82. Residues cysteine 96 and cysteine 103 each coordinate Zn(2+).

This sequence belongs to the PRA-CH family. Homodimer. It depends on Mg(2+) as a cofactor. Zn(2+) is required as a cofactor.

The protein localises to the cytoplasm. The enzyme catalyses 1-(5-phospho-beta-D-ribosyl)-5'-AMP + H2O = 1-(5-phospho-beta-D-ribosyl)-5-[(5-phospho-beta-D-ribosylamino)methylideneamino]imidazole-4-carboxamide. Its pathway is amino-acid biosynthesis; L-histidine biosynthesis; L-histidine from 5-phospho-alpha-D-ribose 1-diphosphate: step 3/9. Its function is as follows. Catalyzes the hydrolysis of the adenine ring of phosphoribosyl-AMP. The sequence is that of Phosphoribosyl-AMP cyclohydrolase from Cupriavidus necator (strain ATCC 17699 / DSM 428 / KCTC 22496 / NCIMB 10442 / H16 / Stanier 337) (Ralstonia eutropha).